Consider the following 317-residue polypeptide: tRNA dimethylallyltransferase (317 aa).

Residue G14–T21 coordinates ATP. T16–T21 contributes to the substrate binding site. The tract at residues D39 to Q42 is interaction with substrate tRNA.

Belongs to the IPP transferase family. As to quaternary structure, monomer. It depends on Mg(2+) as a cofactor.

It catalyses the reaction adenosine(37) in tRNA + dimethylallyl diphosphate = N(6)-dimethylallyladenosine(37) in tRNA + diphosphate. Its function is as follows. Catalyzes the transfer of a dimethylallyl group onto the adenine at position 37 in tRNAs that read codons beginning with uridine, leading to the formation of N6-(dimethylallyl)adenosine (i(6)A). In Bacillus mycoides (strain KBAB4) (Bacillus weihenstephanensis), this protein is tRNA dimethylallyltransferase.